Here is a 259-residue protein sequence, read N- to C-terminus: Ferritin-3, chloroplastic (259 aa).

A chloroplast-targeting transit peptide spans 1–49 (MLLKAASTFSLLNIHGEKKDISPLFSSSSSISSPVSSGKSGNLSFPLRA). Positions 50–88 (SKSSTTTTSTLSGVVFEPFEEVKKEMDLVPSGQQLSLAR) are extension peptide (EP). The Ferritin-like diiron domain occupies 89-242 (HLYSPECEAA…EYVSQLRRLG (154 aa)). 5 residues coordinate Fe cation: Glu106, Glu141, His144, Glu190, and Gln224.

Belongs to the ferritin family. In terms of assembly, oligomer of 24 subunits. There are two types of subunits: L (light) chain and H (heavy) chain. The major chain can be light or heavy, depending on the species and tissue type. The functional molecule forms a roughly spherical shell with a diameter of 12 nm and contains a central cavity into which the insoluble mineral iron core is deposited.

The protein localises to the plastid. The protein resides in the chloroplast. The catalysed reaction is 4 Fe(2+) + O2 + 4 H(+) = 4 Fe(3+) + 2 H2O. In terms of biological role, stores iron in a soluble, non-toxic, readily available form. Important for iron homeostasis. Has ferroxidase activity. Iron is taken up in the ferrous form and deposited as ferric hydroxides after oxidation. The sequence is that of Ferritin-3, chloroplastic (FER3) from Arabidopsis thaliana (Mouse-ear cress).